Reading from the N-terminus, the 121-residue chain is Non-structural protein 3a (121 aa).

The first 39 residues, 1 to 39, serve as a signal peptide directing secretion; sequence MMSMRSRRSMFIEHFNELMMRVQRPPTLLLILLVANAFS.

This is Non-structural protein 3a from Bat coronavirus HKU5 (BtCoV).